A 425-amino-acid chain; its full sequence is Protein translocase subunit SecY (425 aa).

10 helical membrane passes run 15–35, 62–82, 113–131, 139–159, 168–188, 201–221, 266–286, 304–324, 364–384, and 385–405; these read LLSL…VPGI, TVVV…SIIM, LLTL…FYLK, LVLA…VLWL, LGNG…PGFV, IGSW…IVLL, PIIL…LGLL, IIYW…YSTI, LLGA…QAIL, and SLSG…GVIL.

This sequence belongs to the SecY/SEC61-alpha family. Component of the plastid Sec protein translocase complex, which is composed of at least SecY, SecE and SecG.

The protein localises to the plastid. It is found in the chloroplast thylakoid membrane. In terms of biological role, the central subunit of the protein translocation channel SecYE. Consists of two halves formed by TMs 1-5 and 6-10. These two domains form a lateral gate at the front which open onto the bilayer between TMs 2 and 7, and are clamped together by SecE at the back. The channel is closed by both a pore ring composed of hydrophobic SecY resides and a short helix (helix 2A) on the extracellular side of the membrane which forms a plug. This chain is Protein translocase subunit SecY, found in Trieres chinensis (Marine centric diatom).